Here is a 463-residue protein sequence, read N- to C-terminus: Putative glycine--tRNA ligase, cytoplasmic (463 aa).

Positions 25–54 are disordered; the sequence is TLEDSHAAKPETNAAIELPNKSKPEKSAVE. Residues 44-54 are compositionally biased toward basic and acidic residues; it reads NKSKPEKSAVE. Residues Arg153 and Glu239 each contribute to the substrate site. ATP-binding positions include 271–273 and 281–286; these read RNE and LRTREF. Substrate is bound by residues 286–290 and Asn376; that span reads FTLAE. 398–399 is an ATP binding site; it reads EC.

Belongs to the class-II aminoacyl-tRNA synthetase family. As to quaternary structure, homodimer.

Its subcellular location is the cytoplasm. It carries out the reaction tRNA(Gly) + glycine + ATP = glycyl-tRNA(Gly) + AMP + diphosphate. In terms of biological role, catalyzes the attachment of glycine to tRNA(Gly). Is also able produce diadenosine tetraphosphate (Ap4A), a universal pleiotropic signaling molecule needed for cell regulation pathways, by direct condensation of 2 ATPs. The chain is Putative glycine--tRNA ligase, cytoplasmic from Arabidopsis thaliana (Mouse-ear cress).